Reading from the N-terminus, the 251-residue chain is Aliphatic sulfonates import ATP-binding protein SsuB (251 aa).

Residues 3-231 (VSINEVSKYF…PRNKTSQSFQ (229 aa)) form the ABC transporter domain. 39-46 (GPSGCGKS) serves as a coordination point for ATP.

It belongs to the ABC transporter superfamily. Aliphatic sulfonates importer (TC 3.A.1.17.2) family. As to quaternary structure, the complex is composed of two ATP-binding proteins (SsuB), two transmembrane proteins (SsuC) and a solute-binding protein (SsuA).

It localises to the cell membrane. The catalysed reaction is ATP + H2O + aliphatic sulfonate-[sulfonate-binding protein]Side 1 = ADP + phosphate + aliphatic sulfonateSide 2 + [sulfonate-binding protein]Side 1.. Part of the ABC transporter complex SsuABC involved in aliphatic sulfonates import. Responsible for energy coupling to the transport system. This chain is Aliphatic sulfonates import ATP-binding protein SsuB, found in Bacillus anthracis.